Reading from the N-terminus, the 227-residue chain is Extracellular deoxyribonuclease (227 aa).

Positions 1–20 are cleaved as a signal peptide; sequence MFRPLLSFTLARLVSLPLHA.

Belongs to the EndA/NucM nuclease family.

It is found in the secreted. The chain is Extracellular deoxyribonuclease from Aeromonas hydrophila.